Reading from the N-terminus, the 313-residue chain is MPVKIPDHLPAAGILESENIFVMSETRAANQDIRPMKVLILNLMPNKIETETQLLRLLGNTPLQVDVDLLRIHDKESKHTSIDHMNTFYRDFEDVRHKNYDGLIITGAPLGQIDFEEVTYWDHIREIIDWSQQHVTSVLFLCWAAHAGLYHLYGLNRKILQQKRSGVFVHRRTCQHFPLLRGFDDEFFAPHSRFAEMDIEELKQHSELQVLAQSDEAGAYLVLSRNNRNLFVMGHPEYQKSTLNDEYHRDLAQGLNPNVPQNYYRNDDPKDDAIARWHSHGSLLVSNWLNYYVYQLTPYDLSDMSAVTPWESQ.

Cysteine 142 serves as the catalytic Acyl-thioester intermediate. Residues lysine 163 and serine 192 each coordinate substrate. Catalysis depends on histidine 235, which acts as the Proton acceptor. Residue glutamate 237 is part of the active site. Arginine 249 contributes to the substrate binding site.

This sequence belongs to the MetA family.

The protein resides in the cytoplasm. The enzyme catalyses L-homoserine + succinyl-CoA = O-succinyl-L-homoserine + CoA. It functions in the pathway amino-acid biosynthesis; L-methionine biosynthesis via de novo pathway; O-succinyl-L-homoserine from L-homoserine: step 1/1. Functionally, transfers a succinyl group from succinyl-CoA to L-homoserine, forming succinyl-L-homoserine. The protein is Homoserine O-succinyltransferase of Shewanella sp. (strain ANA-3).